The primary structure comprises 285 residues: Large ribosomal subunit protein uL2 (285 aa).

Positions 215 to 285 are disordered; sequence GRSRHKGIRP…IIRNRKGEQY (71 aa). The segment covering 256–272 has biased composition (basic residues); sequence WGKRHMGVKTRNMKKHS.

Belongs to the universal ribosomal protein uL2 family. As to quaternary structure, part of the 50S ribosomal subunit. Forms a bridge to the 30S subunit in the 70S ribosome.

Its function is as follows. One of the primary rRNA binding proteins. Required for association of the 30S and 50S subunits to form the 70S ribosome, for tRNA binding and peptide bond formation. It has been suggested to have peptidyltransferase activity; this is somewhat controversial. Makes several contacts with the 16S rRNA in the 70S ribosome. In Mycoplasma genitalium (strain ATCC 33530 / DSM 19775 / NCTC 10195 / G37) (Mycoplasmoides genitalium), this protein is Large ribosomal subunit protein uL2.